We begin with the raw amino-acid sequence, 239 residues long: Hydroxyacylglutathione hydrolase (239 aa).

The Zn(2+) site is built by histidine 54, histidine 56, aspartate 58, histidine 59, histidine 112, aspartate 131, and histidine 169.

Belongs to the metallo-beta-lactamase superfamily. Glyoxalase II family. Monomer. Zn(2+) serves as cofactor.

It catalyses the reaction an S-(2-hydroxyacyl)glutathione + H2O = a 2-hydroxy carboxylate + glutathione + H(+). The protein operates within secondary metabolite metabolism; methylglyoxal degradation; (R)-lactate from methylglyoxal: step 2/2. In terms of biological role, thiolesterase that catalyzes the hydrolysis of S-D-lactoyl-glutathione to form glutathione and D-lactic acid. In Pelagibacter ubique (strain HTCC1062), this protein is Hydroxyacylglutathione hydrolase.